A 476-amino-acid chain; its full sequence is Glycogen synthase (476 aa).

An ADP-alpha-D-glucose-binding site is contributed by Lys15.

Belongs to the glycosyltransferase 1 family. Bacterial/plant glycogen synthase subfamily.

The catalysed reaction is [(1-&gt;4)-alpha-D-glucosyl](n) + ADP-alpha-D-glucose = [(1-&gt;4)-alpha-D-glucosyl](n+1) + ADP + H(+). The protein operates within glycan biosynthesis; glycogen biosynthesis. Synthesizes alpha-1,4-glucan chains using ADP-glucose. This Streptococcus sanguinis (strain SK36) protein is Glycogen synthase.